Consider the following 156-residue polypeptide: Small ribosomal subunit protein uS7 (156 aa).

Belongs to the universal ribosomal protein uS7 family. In terms of assembly, part of the 30S ribosomal subunit. Contacts proteins S9 and S11.

Its function is as follows. One of the primary rRNA binding proteins, it binds directly to 16S rRNA where it nucleates assembly of the head domain of the 30S subunit. Is located at the subunit interface close to the decoding center, probably blocks exit of the E-site tRNA. The chain is Small ribosomal subunit protein uS7 from Vibrio atlanticus (strain LGP32) (Vibrio splendidus (strain Mel32)).